The sequence spans 90 residues: Small ribosomal subunit protein uS15c (90 aa).

Belongs to the universal ribosomal protein uS15 family. In terms of assembly, part of the 30S ribosomal subunit.

It localises to the plastid. The protein localises to the chloroplast. The polypeptide is Small ribosomal subunit protein uS15c (rps15) (Nandina domestica (Heavenly bamboo)).